The following is a 204-amino-acid chain: Ribosomal RNA small subunit methyltransferase G (204 aa).

S-adenosyl-L-methionine-binding positions include Gly69, Phe74, 123-124 (IE), and Arg137.

The protein belongs to the methyltransferase superfamily. RNA methyltransferase RsmG family.

Its subcellular location is the cytoplasm. The enzyme catalyses guanosine(527) in 16S rRNA + S-adenosyl-L-methionine = N(7)-methylguanosine(527) in 16S rRNA + S-adenosyl-L-homocysteine. Its function is as follows. Specifically methylates the N7 position of guanine in position 527 of 16S rRNA. This chain is Ribosomal RNA small subunit methyltransferase G, found in Ruegeria pomeroyi (strain ATCC 700808 / DSM 15171 / DSS-3) (Silicibacter pomeroyi).